Consider the following 2242-residue polypeptide: Large tegument protein deneddylase (2242 aa).

The interval 1-238 is deubiquitination activity; it reads MKVTQASCHQ…IDLTGVVRES (238 aa). The region spanning 4 to 226 is the Peptidase C76 domain; that stretch reads TQASCHQGDI…AARLVSTYRD (223 aa). Residues Cys-24, Asp-160, and His-162 contribute to the active site. A disordered region spans residues 239 to 318; the sequence is ADTAATTTTA…KTLATASSSS (80 aa). Positions 240-250 are enriched in low complexity; the sequence is DTAATTTTAAP. Pro residues predominate over residues 251–268; sequence SLPPLPDPIVDPGCPPGV. Over residues 304–318 the composition is skewed to low complexity; it reads PSTTSKTLATASSSS. The interaction with inner tegument protein stretch occupies residues 328-332; that stretch reads SSAVP. A compositionally biased stretch (polar residues) spans 1173-1190; the sequence is SQQKMEGQLQETRQQMTE. The interval 1173–1229 is disordered; that stretch reads SQQKMEGQLQETRQQMTETSERLDRSLRQDPGSSSVTRVPEKPFKGQELAGRITPPP. The span at 1191 to 1200 shows a compositional bias: basic and acidic residues; that stretch reads TSERLDRSLR.

This sequence belongs to the herpesviridae large tegument protein family. As to quaternary structure, interacts with host CUL1 and CUL4A; these interactions inhibit the E3 ligase activity of cullins. Interacts with inner tegument protein. Interacts with capsid vertex specific component CVC2. Interacts with the major capsid protein/MCP.

Its subcellular location is the virion tegument. It localises to the host cytoplasm. It is found in the host nucleus. The catalysed reaction is Thiol-dependent hydrolysis of ester, thioester, amide, peptide and isopeptide bonds formed by the C-terminal Gly of ubiquitin (a 76-residue protein attached to proteins as an intracellular targeting signal).. In terms of biological role, large tegument protein that plays multiple roles in the viral cycle. During viral entry, remains associated with the capsid while most of the tegument is detached and participates in the capsid transport toward the host nucleus. Plays a role in the routing of the capsid at the nuclear pore complex and subsequent uncoating. Within the host nucleus, acts as a deneddylase and promotes the degradation of nuclear CRLs (cullin-RING ubiquitin ligases) and thereby stabilizes nuclear CRL substrates, while cytoplasmic CRLs remain unaffected. These modifications prevent host cell cycle S-phase progression and create a favorable environment allowing efficient viral genome replication. Participates later in the secondary envelopment of capsids. Indeed, plays a linker role for the association of the outer viral tegument to the capsids together with the inner tegument protein. In Homo sapiens (Human), this protein is Large tegument protein deneddylase.